Consider the following 412-residue polypeptide: Polyferredoxin protein MvhB (412 aa).

4Fe-4S ferredoxin-type domains lie at 1–29, 30–57, 67–96, 97–127, 138–166, 168–197, 207–236, 238–266, 276–305, 314–345, 357–386, and 385–412; these read MIVVNKEDCIRCGACQGTCPTAAIEVTPE, DVIYCDICGGEPKCVDACPTGALKIEDL, GRIVFNPDKCNECGDCVEVCPPQILKLDEG, KVKKIPLQGFCVMCQKCVDICPVGVIGVEGI, EGPIFIADCVGCGMCVPECPVDAITLEKV, GVIEIDEDTCIKCGVCAQTCPWNAVYISGK, RKFELDEEACIGCNTCVEACPGDFIVPKSS, LTVELPAICTACGLCEQLCPVDAIDLDVE, EGLVWDEGKCDFIGACANICPNDAIRVVTR, EKVDEEPSFAMCTRCGACTMACPKGALSLVDM, KRVQYNPALCDQCGDCIEACPYDMLKLTDE, and DEKVPLKGFCILCDQCIPACPKGALSLK. Positions 9, 12, 15, and 19 each coordinate [4Fe-4S] cluster. The [4Fe-4S] cluster site is built by C76, C79, C82, C86, C107, C110, C113, C117, C146, C149, C152, C156, C177, C180, C183, C187, C216, C219, C222, C226, C246, C249, C252, and C256. [4Fe-4S] cluster is bound by residues C325, C328, C331, C335, C366, C369, C372, C376, C394, C397, C400, and C404.

It depends on [4Fe-4S] cluster as a cofactor.

This Methanothermobacter marburgensis (strain ATCC BAA-927 / DSM 2133 / JCM 14651 / NBRC 100331 / OCM 82 / Marburg) (Methanobacterium thermoautotrophicum) protein is Polyferredoxin protein MvhB (mvhB).